The following is a 187-amino-acid chain: Calmodulin-like protein 1 (187 aa).

A2 bears the N-acetylalanine mark. EF-hand domains follow at residues 8–43 (EQIV…LGQN), 44–79 (PTEA…KLRD), 81–116 (DSEE…IGER), and 117–152 (LTDE…KKRR). Ca(2+)-binding residues include D21, D23, D25, S27, E32, D57, D59, N61, N63, E68, D94, D96, N98, E105, D130, D132, D134, Q136, and E141. The tract at residues 153-187 (KRIEEKREHDGGSRTKSAGPSAAPASKRGQKCVIL) is disordered. Over residues 154–165 (RIEEKREHDGGS) the composition is skewed to basic and acidic residues. Residues 169 to 178 (SAGPSAAPAS) show a composition bias toward low complexity. C184 bears the Cysteine methyl ester mark. C184 carries S-farnesyl cysteine lipidation. Positions 185–187 (VIL) are cleaved as a propeptide — removed in mature form.

The protein belongs to the calmodulin family. As to expression, expressed in roots, etiolated shoots and flowers.

Its subcellular location is the membrane. Calcium-binding protein that binds and activates CAMK1, a calcium/calmodulin-dependent kinase. The sequence is that of Calmodulin-like protein 1 (CML1) from Oryza sativa subsp. indica (Rice).